We begin with the raw amino-acid sequence, 400 residues long: Argininosuccinate synthase (400 aa).

Position 8–16 (8–16 (AYSGGLDTS)) interacts with ATP. The L-citrulline site is built by tyrosine 87 and serine 92. Glycine 117 provides a ligand contact to ATP. Threonine 119, asparagine 123, and aspartate 124 together coordinate L-aspartate. Asparagine 123 serves as a coordination point for L-citrulline. The L-citrulline site is built by arginine 127, serine 175, glutamate 259, and tyrosine 271.

The protein belongs to the argininosuccinate synthase family. Type 1 subfamily. In terms of assembly, homotetramer.

Its subcellular location is the cytoplasm. The enzyme catalyses L-citrulline + L-aspartate + ATP = 2-(N(omega)-L-arginino)succinate + AMP + diphosphate + H(+). The protein operates within amino-acid biosynthesis; L-arginine biosynthesis; L-arginine from L-ornithine and carbamoyl phosphate: step 2/3. This chain is Argininosuccinate synthase, found in Frankia casuarinae (strain DSM 45818 / CECT 9043 / HFP020203 / CcI3).